The chain runs to 177 residues: Ubiquitin-conjugating enzyme E2 C (177 aa).

The interval 1-31 is disordered; sequence MSGQNIDPAANQVRQKERPRDMTTSKERHSV. Over residues 14–30 the composition is skewed to basic and acidic residues; sequence RQKERPRDMTTSKERHS. In terms of domain architecture, UBC core spans 30–175; the sequence is SVSKRLQQEL…LHEKYKTAQS (146 aa). Residue C114 is the Glycyl thioester intermediate of the active site.

It belongs to the ubiquitin-conjugating enzyme family. Component of the APC/C complex. In terms of processing, autoubiquitinated by the APC/C complex, leading to its degradation by the proteasome.

It carries out the reaction S-ubiquitinyl-[E1 ubiquitin-activating enzyme]-L-cysteine + [E2 ubiquitin-conjugating enzyme]-L-cysteine = [E1 ubiquitin-activating enzyme]-L-cysteine + S-ubiquitinyl-[E2 ubiquitin-conjugating enzyme]-L-cysteine.. The catalysed reaction is S-ubiquitinyl-[E1 ubiquitin-activating enzyme]-L-cysteine + [acceptor protein]-L-lysine = [E1 ubiquitin-activating enzyme]-L-cysteine + N(6)-monoubiquitinyl-[acceptor protein]-L-lysine.. Its pathway is protein modification; protein ubiquitination. Catalyzes the covalent attachment of ubiquitin to other proteins. Acts as an essential factor of the anaphase promoting complex/cyclosome (APC/C), a cell cycle-regulated ubiquitin ligase that is essential for the transition from metaphase to anaphase in mitosis. Involved in both degradation of proteins responsible for maintaining sister chromatid cohesion at the onset of anaphase and of mitotic cyclins A and B at the exit of mitosis. Acts by initiating polyubiquitin chains on APC/C substrates, leading to the degradation of APC/C substrates by the proteasome and promoting mitotic exit. This chain is Ubiquitin-conjugating enzyme E2 C (UBE2C), found in Spisula solidissima (Atlantic surf-clam).